The chain runs to 158 residues: MWQFTVVSLGWLAVFLSLSGAKGNSCPASWISRNGVCNKLFPDRKTWLEAEMYCRALKPGGHLASLHKDSDSTVLAWYISDHFKGAGHVWIGLRDTNKKRSWKWSDRTSTNYFSWNQGEPNNVQDNENCVHLWAPSGYLKWNDEPCASLHPFICQYKL.

The signal sequence occupies residues 1–23 (MWQFTVVSLGWLAVFLSLSGAKG). Disulfide bonds link C26–C37, C54–C154, and C129–C146. Positions 33–155 (RNGVCNKLFP…CASLHPFICQ (123 aa)) constitute a C-type lectin domain. The Mannose-binding motif lies at 119-121 (EPN). Residues E127, N142, and D143 each coordinate Ca(2+).

The protein belongs to the true venom lectin family. In terms of tissue distribution, expressed by the venom gland.

It localises to the secreted. In terms of biological role, mannose-binding lectin which recognizes specific carbohydrate structures and agglutinates a variety of animal cells by binding to cell-surface glycoproteins and glycolipids. May be a calcium-dependent lectin. This is C-type lectin from Cerberus rynchops (Dog-faced water snake).